The primary structure comprises 367 residues: Porin Omp2a (367 aa).

The signal sequence occupies residues 1 to 22 (MNIKSLLLGSAAALVAASGAQA).

The protein belongs to the alphaproteobacteria porin family. In terms of assembly, monomer.

The protein resides in the cell outer membrane. Functionally, forms passive diffusion pores that allow small molecular weight hydrophilic materials across the outer membrane. This Brucella canis (strain ATCC 23365 / NCTC 10854 / RM-666) protein is Porin Omp2a (omp2a).